Here is a 71-residue protein sequence, read N- to C-terminus: uncharacterized protein (71 aa).

The segment at 23 to 71 (ENEKAGQSEEYDDDDKEENKKRRRNNGRRGPPEKKKSRRGGEEQTQRII) is disordered. Residues 52 to 71 (GPPEKKKSRRGGEEQTQRII) show a composition bias toward basic and acidic residues.

This is an uncharacterized protein from Caenorhabditis elegans.